Consider the following 311-residue polypeptide: Probable branched-chain-amino-acid aminotransferase (311 aa).

Position 160 is an N6-(pyridoxal phosphate)lysine (Lys-160).

It belongs to the class-IV pyridoxal-phosphate-dependent aminotransferase family. It depends on pyridoxal 5'-phosphate as a cofactor.

The enzyme catalyses L-leucine + 2-oxoglutarate = 4-methyl-2-oxopentanoate + L-glutamate. The catalysed reaction is L-isoleucine + 2-oxoglutarate = (S)-3-methyl-2-oxopentanoate + L-glutamate. It catalyses the reaction L-valine + 2-oxoglutarate = 3-methyl-2-oxobutanoate + L-glutamate. The protein operates within amino-acid biosynthesis; L-isoleucine biosynthesis; L-isoleucine from 2-oxobutanoate: step 4/4. It participates in amino-acid biosynthesis; L-leucine biosynthesis; L-leucine from 3-methyl-2-oxobutanoate: step 4/4. It functions in the pathway amino-acid biosynthesis; L-valine biosynthesis; L-valine from pyruvate: step 4/4. Its function is as follows. Acts on leucine, isoleucine and valine. The chain is Probable branched-chain-amino-acid aminotransferase (ilvE) from Aquifex aeolicus (strain VF5).